Here is a 250-residue protein sequence, read N- to C-terminus: Protein lin-28 homolog B (250 aa).

A disordered region spans residues 1–26 (MAEGGASKGGGEEPGKLPEPAEEESQ). Positions 29–102 (RGTGHCKWFN…GLESIRVTGP (74 aa)) constitute a CSD domain. Serine 54, serine 96, serine 105, and serine 110 each carry phosphoserine. The segment at 98-126 (RVTGPGGSPCLGSERRPKGKTLQKRKPKG) is disordered. Residues 112–125 (RRPKGKTLQKRKPK) carry the Bipartite nuclear localization signal motif. Positions 114–125 (PKGKTLQKRKPK) are enriched in basic residues. 2 consecutive CCHC-type zinc fingers follow at residues 127-144 (DRCYNCGGLDHHAKECSL) and 149-166 (KKCHYCQSIMHMVANCPH). Positions 129, 132, 137, 142, 151, 154, 159, and 164 each coordinate Zn(2+). The interval 169–250 (VAQPPASSQG…GPSVQKRKKT (82 aa)) is disordered. Polar residues predominate over residues 173 to 191 (PASSQGRQEAESQPCTSTL). Serine 203 carries the phosphoserine modification. Residues 210 to 219 (ARAEISERSG) are compositionally biased toward basic and acidic residues. Positions 220–231 (RSPQEASSTKSS) are enriched in polar residues. Positions 239 to 250 (KKGPSVQKRKKT) match the Nucleolar localization signal motif.

It belongs to the lin-28 family. In terms of tissue distribution, expressed at high levels in the placenta and, at mucher lower, in testis and fetal liver. Isoform 1 is only detected in placenta and in moderately and poorly differentiated hepatocellular carcinoma cells (at protein level). Isoform 2 is detected in fetal liver, non-tumor liver tissues, as well as well-differentiated tumor tissues (at protein level). Tends to be up-regulated in triple-negative (ER-,PR-,HER2-) breast tumors, as well as in liver, ovarian, and thyroid carcinomas.

The protein resides in the nucleus. It is found in the nucleolus. Its subcellular location is the cytoplasm. Suppressor of microRNA (miRNA) biogenesis, including that of let-7 and possibly of miR107, miR-143 and miR-200c. Binds primary let-7 transcripts (pri-let-7), including pri-let-7g and pri-let-7a-1, and sequester them in the nucleolus, away from the microprocessor complex, hence preventing their processing into mature miRNA. Does not act on pri-miR21. The repression of let-7 expression is required for normal development and contributes to maintain the pluripotent state of embryonic stem cells by preventing let-7-mediated differentiation. When overexpressed, recruits ZCCHC11/TUT4 uridylyltransferase to pre-let-7 transcripts, leading to their terminal uridylation and degradation. This activity might not be relevant in vivo, as LIN28B-mediated inhibition of let-7 miRNA maturation appears to be ZCCHC11-independent. Interaction with target pre-miRNAs occurs via an 5'-GGAG-3' motif in the pre-miRNA terminal loop. Mediates MYC-induced let-7 repression. When overexpressed, isoform 1 stimulates growth of the breast adenocarcinoma cell line MCF-7. Isoform 2 has no effect on cell growth. The chain is Protein lin-28 homolog B (LIN28B) from Homo sapiens (Human).